The sequence spans 79 residues: Protein S100-G (79 aa).

Position 2 is an N-acetylserine (Ser2). EF-hand domains lie at 13-48 (IFQK…KASS) and 45-79 (KASS…KLSQ). Positions 26 and 31 each coordinate Ca(2+). A phosphoserine mark is found at Ser42 and Ser47. Ca(2+)-binding residues include Asp58, Asn60, Asp62, Glu64, and Glu69.

The protein belongs to the S-100 family.

The polypeptide is Protein S100-G (S100g) (Rattus norvegicus (Rat)).